Consider the following 544-residue polypeptide: Aspartokinase 2, chloroplastic (544 aa).

The N-terminal 84 residues, Met-1–Cys-84, are a transit peptide targeting the chloroplast. 3 residues coordinate ATP: Lys-87, Gly-90, and Ser-119. Substrate is bound at residue Glu-203. 2 ACT domains span residues Ile-401 to Ile-479 and Ser-481 to Pro-544.

This sequence belongs to the aspartokinase family. As to expression, expressed in stems, leaves, floral organs and young seedlings.

It is found in the plastid. It localises to the chloroplast. It carries out the reaction L-aspartate + ATP = 4-phospho-L-aspartate + ADP. It participates in amino-acid biosynthesis; L-lysine biosynthesis via DAP pathway; (S)-tetrahydrodipicolinate from L-aspartate: step 1/4. The protein operates within amino-acid biosynthesis; L-methionine biosynthesis via de novo pathway; L-homoserine from L-aspartate: step 1/3. It functions in the pathway amino-acid biosynthesis; L-threonine biosynthesis; L-threonine from L-aspartate: step 1/5. Allosterically inhibited by lysine, but not by S-adenosyl-L-methionine (SAM). K(0.5) for lysine in the presence of physiological concentrations of substrates is 12.5 uM. No inhibition by threonine or leucine and no activation or inhibition by alanine, cysteine, isoleucine, serine, valine, methionine, glutamine, asparagine, glutamic acid or arginine. Functionally, involved in the first step of essential amino acids lysine, threonine, methionine and isoleucine synthesis via the aspartate-family pathway. The polypeptide is Aspartokinase 2, chloroplastic (AK2) (Arabidopsis thaliana (Mouse-ear cress)).